A 499-amino-acid chain; its full sequence is Ethanolamine-phosphate phospho-lyase (499 aa).

Lys-278 is subject to N6-(pyridoxal phosphate)lysine.

Belongs to the class-III pyridoxal-phosphate-dependent aminotransferase family. As to quaternary structure, homotetramer. Pyridoxal 5'-phosphate is required as a cofactor.

The protein localises to the mitochondrion. It carries out the reaction phosphoethanolamine + H2O = acetaldehyde + NH4(+) + phosphate. In terms of biological role, catalyzes the pyridoxal-phosphate-dependent breakdown of phosphoethanolamine, converting it to ammonia, inorganic phosphate and acetaldehyde. This is Ethanolamine-phosphate phospho-lyase (Etnppl) from Mus musculus (Mouse).